Reading from the N-terminus, the 180-residue chain is Chromatin structure-remodeling complex protein RSC14 (180 aa).

Interacts with STH1, RSC3 and ARP9. Component of the two forms of the RSC complex composed of at least either RSC1 or RSC2, and ARP7, ARP9, LDB7, NPL6, RSC3, RSC30, RSC4, RSC58, RSC6, RSC8, RSC9, SFH1, STH1, HTL1 and probably RTT102. The complexes interact with histone and histone variant components of centromeric chromatin. Component of a fungal-specific module (HTL1-LDB7-NPL6-RSC3-RSC30) within the RSC complex.

The protein resides in the nucleus. Functionally, component of the chromatin structure-remodeling complex (RSC), which is involved in transcription regulation and nucleosome positioning. RSC is responsible for the transfer of a histone octamer from a nucleosome core particle to naked DNA. The reaction requires ATP and involves an activated RSC-nucleosome intermediate. Remodeling reaction also involves DNA translocation, DNA twist and conformational change. As a reconfigurer of centromeric and flanking nucleosomes, RSC complex is required both for proper kinetochore function in chromosome segregation and, via a PKC1-dependent signaling pathway, for organization of the cellular cytoskeleton. Together with HTL1, NPL6, RSC3, RSC30 components, defines a fungal-specific module within the RSC complex that plays a role in many cellular functions including the maintenance of cell wall integrity. May be involved in the transfer of mannosylphosphate (MP) groups into N-linked oligosaccharides. This chain is Chromatin structure-remodeling complex protein RSC14 (LDB7), found in Saccharomyces cerevisiae (strain ATCC 204508 / S288c) (Baker's yeast).